Reading from the N-terminus, the 95-residue chain is Nucleoid-associated protein MMOB0740 (95 aa).

It belongs to the YbaB/EbfC family. Homodimer.

It localises to the cytoplasm. The protein resides in the nucleoid. Its function is as follows. Binds to DNA and alters its conformation. May be involved in regulation of gene expression, nucleoid organization and DNA protection. The polypeptide is Nucleoid-associated protein MMOB0740 (Mycoplasma mobile (strain ATCC 43663 / 163K / NCTC 11711) (Mesomycoplasma mobile)).